Here is a 347-residue protein sequence, read N- to C-terminus: D-alanine--D-alanine ligase (347 aa).

The region spanning 138 to 339 (KILCSHAGIP…YSQVIETILA (202 aa)) is the ATP-grasp domain. 171–226 (SDRFTFPLFVKPVDAGSSFGCTFVDFFEQLPVAIEHALQHGKSAIVEPALDAPEVF) is a binding site for ATP. Mg(2+)-binding residues include Asp-296, Glu-308, and Asn-310.

This sequence belongs to the D-alanine--D-alanine ligase family. It depends on Mg(2+) as a cofactor. Mn(2+) serves as cofactor.

The protein resides in the cytoplasm. The catalysed reaction is 2 D-alanine + ATP = D-alanyl-D-alanine + ADP + phosphate + H(+). Its pathway is cell wall biogenesis; peptidoglycan biosynthesis. In terms of biological role, cell wall formation. This is D-alanine--D-alanine ligase from Tropheryma whipplei (strain Twist) (Whipple's bacillus).